Reading from the N-terminus, the 289-residue chain is Polyamine aminopropyltransferase (289 aa).

A PABS domain is found at 5–245 (PGPIVLVEPL…YAVNYILGSL (241 aa)). Gln36 is an S-methyl-5'-thioadenosine binding site. His67 and Glu91 together coordinate spermidine. S-methyl-5'-thioadenosine-binding positions include Asp111 and 143–144 (DG). The Proton acceptor role is filled by Asp164.

It belongs to the spermidine/spermine synthase family. In terms of assembly, homodimer or homotetramer.

The protein resides in the cytoplasm. The enzyme catalyses S-adenosyl 3-(methylsulfanyl)propylamine + putrescine = S-methyl-5'-thioadenosine + spermidine + H(+). The protein operates within amine and polyamine biosynthesis; spermidine biosynthesis; spermidine from putrescine: step 1/1. Functionally, catalyzes the irreversible transfer of a propylamine group from the amino donor S-adenosylmethioninamine (decarboxy-AdoMet) to putrescine (1,4-diaminobutane) to yield spermidine. This chain is Polyamine aminopropyltransferase, found in Pyrobaculum arsenaticum (strain DSM 13514 / JCM 11321 / PZ6).